Reading from the N-terminus, the 185-residue chain is Early nodulin-like protein 17 (185 aa).

An N-terminal signal peptide occupies residues 1–21 (MARRDQLVSFLCFFLIVSAVA). A Phytocyanin domain is found at 37–137 (KQYVVGGRSG…GQRLMINVDS (101 aa)). Asparagine 79 and asparagine 94 each carry an N-linked (GlcNAc...) asparagine glycan. Cysteines 93 and 125 form a disulfide. The segment at 136-155 (DSAPSPSPSPSPAPQEAATA) is disordered. Serine 156 carries the GPI-anchor amidated serine lipid modification. The propeptide at 157–185 (AATSSSAATAAHALLLAAMAMMGLILGEW) is removed in mature form.

It belongs to the early nodulin-like (ENODL) family. Expressed ubiquitously. Accumulates mainly in anthers, stigmas and ovaries.

The protein localises to the cell membrane. Functionally, may act as a carbohydrate transporter. Required for male fertility and seed yield. This is Early nodulin-like protein 17 from Oryza sativa subsp. japonica (Rice).